The primary structure comprises 298 residues: Probable mitochondrial 2-oxodicarboxylate carrier (298 aa).

Helical transmembrane passes span 6 to 26 (IPFP…VLTL), 62 to 81 (HRLY…KRAL), 105 to 125 (ALSI…VVPF), 159 to 179 (ALYN…AGYF), 203 to 223 (LIAG…FDVI), and 267 to 287 (VLRL…VIEF). Solcar repeat units lie at residues 6-92 (IPFP…YSKL), 102-188 (SSPA…IRNS), and 197-287 (GEIR…VIEF).

This sequence belongs to the mitochondrial carrier (TC 2.A.29) family.

Its subcellular location is the mitochondrion inner membrane. In terms of biological role, transports C5-C7 oxodicarboxylates across the inner membranes of mitochondria. The polypeptide is Probable mitochondrial 2-oxodicarboxylate carrier (Schizosaccharomyces pombe (strain 972 / ATCC 24843) (Fission yeast)).